A 237-amino-acid polypeptide reads, in one-letter code: UPF0758 protein Aave_3773 (237 aa).

The region spanning 115–237 (LFHSPRAVRD…SLSMAEEGLI (123 aa)) is the MPN domain. Residues His186, His188, and Asp199 each coordinate Zn(2+). A JAMM motif motif is present at residues 186–199 (HNHPSGQVQPSRAD).

This sequence belongs to the UPF0758 family.

The chain is UPF0758 protein Aave_3773 from Paracidovorax citrulli (strain AAC00-1) (Acidovorax citrulli).